The primary structure comprises 80 residues: MGFTKIVVTFFLVVMLAVSSSSQNAMASEIKAKINGLECFNTCTPYYDDYKCNVDCLSSGYPAGDCHIVSPSQPKKCCCY.

An N-terminal signal peptide occupies residues 1–27; the sequence is MGFTKIVVTFFLVVMLAVSSSSQNAMA. Cystine bridges form between Cys-39–Cys-79, Cys-43–Cys-66, Cys-52–Cys-77, and Cys-56–Cys-78.

This sequence belongs to the DEFL family.

The protein localises to the secreted. The sequence is that of Defensin-like protein 50 (LCR49) from Arabidopsis thaliana (Mouse-ear cress).